Consider the following 100-residue polypeptide: Dromyosuppressin (100 aa).

The N-terminal stretch at 1–24 (MSFAQFFVACCLAIVLLAVSNTRA) is a signal peptide. Residues 25 to 84 (AVQGPPLCQSGIVEEMPPHIRKVCQALENSDQLTSALKSYINNEASALVANSDDLLKNYN) constitute a propeptide that is removed on maturation. Phenylalanine 96 is modified (phenylalanine amide).

This sequence belongs to the myosuppressin family.

The protein localises to the secreted. In terms of biological role, myoinhibiting neuropeptide. The protein is Dromyosuppressin of Drosophila melanogaster (Fruit fly).